The sequence spans 278 residues: Phosphoenolpyruvate carboxylase kinase 2 (278 aa).

A Protein kinase domain is found at 11-269 (YQLCDEIGRG…AEDALRHSWM (259 aa)). Residues 17-25 (IGRGRFGTI) and K40 contribute to the ATP site. The active-site Proton acceptor is the D137.

The protein belongs to the protein kinase superfamily. Ser/Thr protein kinase family. In terms of tissue distribution, expressed in flowers and roots, and at lower levels in cauline leaves. Barely detectable in rosette leaves and stems.

It catalyses the reaction L-seryl-[protein] + ATP = O-phospho-L-seryl-[protein] + ADP + H(+). The enzyme catalyses L-threonyl-[protein] + ATP = O-phospho-L-threonyl-[protein] + ADP + H(+). Functionally, calcium-independent kinase involved in light-dependent phosphoenolpyruvate carboxylase phosphorylation. This chain is Phosphoenolpyruvate carboxylase kinase 2 (PPCK2), found in Arabidopsis thaliana (Mouse-ear cress).